A 96-amino-acid polypeptide reads, in one-letter code: uncharacterized protein (96 aa).

Asn-4 carries N-linked (GlcNAc...) asparagine glycosylation. The helical transmembrane segment at Val-59 to Leu-81 threads the bilayer.

It is found in the membrane. This is an uncharacterized protein from Saccharomyces cerevisiae (strain ATCC 204508 / S288c) (Baker's yeast).